Here is a 191-residue protein sequence, read N- to C-terminus: Small ribosomal subunit protein uS5 (191 aa).

Residues 1-20 (MAGERERGGRERSRDREERD) form a disordered region. The S5 DRBM domain occupies 23–86 (FVDKLVHINR…ESAKRNLTRV (64 aa)).

It belongs to the universal ribosomal protein uS5 family. Part of the 30S ribosomal subunit. Contacts proteins S4 and S8.

In terms of biological role, with S4 and S12 plays an important role in translational accuracy. Its function is as follows. Located at the back of the 30S subunit body where it stabilizes the conformation of the head with respect to the body. The protein is Small ribosomal subunit protein uS5 of Nitrobacter winogradskyi (strain ATCC 25391 / DSM 10237 / CIP 104748 / NCIMB 11846 / Nb-255).